The following is a 95-amino-acid chain: Ferredoxin-like protein FixX (95 aa).

This sequence belongs to the bacterial-type ferredoxin family. FixX subfamily.

Its function is as follows. Could be part of an electron transfer system required for anaerobic carnitine reduction. Could be a 3Fe-4S cluster-containing protein. The polypeptide is Ferredoxin-like protein FixX (fixX) (Salmonella typhimurium (strain LT2 / SGSC1412 / ATCC 700720)).